An 855-amino-acid chain; its full sequence is E3 ubiquitin-protein ligase TRIM71 (855 aa).

Residue A2 is modified to N-acetylalanine. An RING-type zinc finger spans residues 12–94 (CLLCKEMCGS…ALKLRCPVCD (83 aa)). The span at 26 to 42 (SSNSSASSSSSQTSTSS) shows a compositional bias: low complexity. 2 disordered regions span residues 26–48 (SSNS…GGGP) and 127–177 (EEPP…SPGS). Gly residues predominate over residues 135 to 145 (RAGGGPGGAGG). Basic residues predominate over residues 147-157 (SNHRHHAHHPA). The segment at 181 to 228 (RRPHGCSSCDEGNAASSRCLDCQEHLCDNCVRAHQRVRLTKDHYIERG) adopts a B box-type 1; atypical zinc-finger fold. Residues 260 to 301 (ERLGFCQHHDDEVLHLYCDTCSVPICRECTLGRHGGHSFAYL) form a B box-type 2 zinc finger. Zn(2+) is bound by residues C265, H268, C288, and H293. Coiled-coil stretches lie at residues 314–352 (QLLA…SEVK) and 378–411 (QVKA…VLEE). Residues 466–567 (SSGAFAPLTK…IENSPFKVVV (102 aa)) form a Filamin repeat. NHL repeat units follow at residues 580–623 (GLSF…FKPC), 627–670 (HHKF…FTFE), 674–717 (LLKF…FGPD), 721–764 (LNKY…IHPD), 768–811 (ARFL…FEAN), and 815–855 (LCKF…ILIF).

Belongs to the TRIM/RBCC family. Interacts (via NHL repeats) with AGO2; the interaction increases in presence of RNA. Interacts with HSP90AA1. Interacts (via NHL repeats) with MOV10, PABPC1, PUM1, PUM2, STAU2, XRN1 and XRN2 in an RNA-dependent manner. Interacts with SHCBP1; leading to enhance its stability. Post-translationally, autoubiquitinated. In terms of tissue distribution, highly expressed in undifferentiated embryonic stem cells (ESCs). Expressed in the epiblast and in interfollicular epidermal stem cells during early development. Also expressed in male germ cells and in the reproductive tract. Highly expressed in neuroepithelial cells, and its expression declines as neurogenesis proceeds (at protein level). Expressed in ependymal cells of the brain.

The protein localises to the cytoplasm. It localises to the P-body. The catalysed reaction is S-ubiquitinyl-[E2 ubiquitin-conjugating enzyme]-L-cysteine + [acceptor protein]-L-lysine = [E2 ubiquitin-conjugating enzyme]-L-cysteine + N(6)-ubiquitinyl-[acceptor protein]-L-lysine.. It participates in protein modification; protein ubiquitination. E3 ubiquitin-protein ligase that cooperates with the microRNAs (miRNAs) machinery and promotes embryonic stem cells proliferation and maintenance. Binds to miRNAs and associates with AGO2, participating in post-transcriptional repression of transcripts such as CDKN1A. Facilitates the G1-S transition to promote rapid embryonic stem cell self-renewal by repressing CDKN1A expression. In addition, participates in post-transcriptional mRNA repression in a miRNA independent mechanism. Required to maintain proliferation and prevent premature differentiation of neural progenitor cells during early neural development: positively regulates FGF signaling by controlling the stability of SHCBP1. Specific regulator of miRNA biogenesis. miRNA Binds MIR29A hairpin and postranscriptionally modulates MIR29A levels, which indirectly regulates TET proteins expression. This is E3 ubiquitin-protein ligase TRIM71 (Trim71) from Mus musculus (Mouse).